The sequence spans 631 residues: 1-deoxy-D-xylulose-5-phosphate synthase (631 aa).

Residues histidine 73 and 114-116 contribute to the thiamine diphosphate site; that span reads GHS. Aspartate 145 lines the Mg(2+) pocket. Residues 146-147, asparagine 174, tyrosine 285, and glutamate 366 contribute to the thiamine diphosphate site; that span reads GA. Asparagine 174 is a binding site for Mg(2+).

This sequence belongs to the transketolase family. DXPS subfamily. As to quaternary structure, homodimer. Mg(2+) serves as cofactor. It depends on thiamine diphosphate as a cofactor.

It carries out the reaction D-glyceraldehyde 3-phosphate + pyruvate + H(+) = 1-deoxy-D-xylulose 5-phosphate + CO2. It participates in metabolic intermediate biosynthesis; 1-deoxy-D-xylulose 5-phosphate biosynthesis; 1-deoxy-D-xylulose 5-phosphate from D-glyceraldehyde 3-phosphate and pyruvate: step 1/1. In terms of biological role, catalyzes the acyloin condensation reaction between C atoms 2 and 3 of pyruvate and glyceraldehyde 3-phosphate to yield 1-deoxy-D-xylulose-5-phosphate (DXP). This Desulfitobacterium hafniense (strain DSM 10664 / DCB-2) protein is 1-deoxy-D-xylulose-5-phosphate synthase.